The chain runs to 124 residues: Large ribosomal subunit protein bL12 (124 aa).

This sequence belongs to the bacterial ribosomal protein bL12 family. In terms of assembly, homodimer. Part of the ribosomal stalk of the 50S ribosomal subunit. Forms a multimeric L10(L12)X complex, where L10 forms an elongated spine to which 2 to 4 L12 dimers bind in a sequential fashion. Binds GTP-bound translation factors.

Its function is as follows. Forms part of the ribosomal stalk which helps the ribosome interact with GTP-bound translation factors. Is thus essential for accurate translation. The protein is Large ribosomal subunit protein bL12 of Paracoccus denitrificans (strain Pd 1222).